Reading from the N-terminus, the 47-residue chain is Defensin-2 (47 aa).

4 disulfide bridges follow: C3/C47, C14/C35, C20/C41, and C24/C43.

The protein belongs to the DEFL family. In terms of tissue distribution, epidermis and vascular bundles of pods, stems, roots, leaves and wet or dry seeds.

Functionally, possesses antifungal activity sensitive to inorganic cations. The sequence is that of Defensin-2 from Pisum sativum (Garden pea).